The following is a 789-amino-acid chain: Ribosomal protein S6 kinase alpha-5 (789 aa).

The Protein kinase 1 domain maps to 39–308 (FELLKVLGTG…ADEIKQHPFF (270 aa)). Residues 45-53 (LGTGAYGKV) and K71 each bind ATP. Catalysis depends on D167, which acts as the Proton acceptor. S202 is subject to Phosphoserine; by autocatalysis. The 69-residue stretch at 309 to 377 (QNINWDDLAA…VAPSILFKRN (69 aa)) folds into the AGC-kinase C-terminal domain. Phosphoserine is present on S350. Phosphoserine; by autocatalysis is present on residues S366 and S371. The region spanning 416–677 (DLKEKPLGEG…MSSLRYNEWL (262 aa)) is the Protein kinase 2 domain. ATP-binding positions include 422-430 (LGEGSFSIC) and K445. Residue D534 is the Proton acceptor of the active site. Phosphothreonine is present on residues T571 and T690. The tract at residues 731–789 (AKRRKMKKTSTSTETRSSSSESSHSSSSHSHGKTTPTKTLQPTNPTDSNNPETIFQFSD) is disordered. Residues 739–769 (TSTSTETRSSSSESSHSSSSHSHGKTTPTKT) are compositionally biased toward low complexity. Residues S740, S742, and S748 each carry the phosphoserine; by autocatalysis modification. Polar residues predominate over residues 770-789 (LQPTNPTDSNNPETIFQFSD).

This sequence belongs to the protein kinase superfamily. AGC Ser/Thr protein kinase family. S6 kinase subfamily. Mg(2+) is required as a cofactor. Post-translationally, ser-366 and Thr-571 phosphorylation is required for kinase activity. Ser-366 and Ser-202 are autophosphorylated by the C-terminal kinase domain, and their phosphorylation is essential for the catalytic activity of the N-terminal kinase domain. Phosphorylated at Ser-350, Thr-571 and Thr-690 by MAP kinases. Autophosphorylated at Ser-740, Ser-742 and Ser-748 by the N-terminal kinase domain. As to expression, widely expressed with high levels in heart, brain and placenta. Less abundant in lung, kidney and liver.

The protein localises to the nucleus. The enzyme catalyses L-seryl-[protein] + ATP = O-phospho-L-seryl-[protein] + ADP + H(+). It catalyses the reaction L-threonyl-[protein] + ATP = O-phospho-L-threonyl-[protein] + ADP + H(+). Activated by phosphorylation at Ser-350, Thr-571 and Thr-690 by MAP kinases, and by further autophosphorylation of Ser-202, Ser-366 and Ser-371 by the activated C-terminal kinase domain. The active N-terminal kinase domain finally phosphorylates downstream substrates, as well as Ser-740, Ser-742 and Ser-748 in its own C-terminal region. Serine/threonine-protein kinase that is required for the mitogen or stress-induced phosphorylation of the transcription factors CREB1 and ATF1 and that contributes to gene activation by histone phosphorylation. Phosphorylates CREB1 and ATF1 in response to mitogenic or stress stimuli such as UV-C irradiation, epidermal growth factor (EGF) and anisomycin. Directly represses transcription via phosphorylation of 'Ser-1' of histone H2A. Phosphorylates 'Ser-10' of histone H3 in response to mitogenics, stress stimuli and EGF, which results in the transcriptional activation of several immediate early genes, including proto-oncogenes c-fos/FOS and c-jun/JUN. May also phosphorylate 'Ser-28' of histone H3. Mediates the mitogen- and stress-induced phosphorylation of high mobility group protein 1 (HMGN1/HMG14). In Gallus gallus (Chicken), this protein is Ribosomal protein S6 kinase alpha-5 (RPS6KA5).